Here is a 739-residue protein sequence, read N- to C-terminus: Platelet endothelial cell adhesion molecule (739 aa).

A signal peptide spans Met-1–Gly-27. The Extracellular portion of the chain corresponds to Gln-28–Lys-599. Ig-like C2-type domains follow at residues Asn-35–Thr-120, Gly-145–Gly-213, and Pro-236–Ser-315. N-linked (GlcNAc...) asparagine glycans are attached at residues Asn-52, Asn-84, and Asn-151. Cys-57 and Cys-109 are joined by a disulfide. 2 cysteine pairs are disulfide-bonded: Cys-152/Cys-206 and Cys-256/Cys-304. N-linked (GlcNAc...) asparagine glycans are attached at residues Asn-301, Asn-320, Asn-356, Asn-371, Asn-435, Asn-446, Asn-453, Asn-550, and Asn-578. Ig-like C2-type domains lie at Pro-328–Thr-403, Gly-424–Arg-493, and Pro-499–Thr-590. 3 disulfides stabilise this stretch: Cys-347/Cys-386, Cys-431/Cys-476, and Cys-522/Cys-571. The helical transmembrane segment at Gly-600–Ala-618 threads the bilayer. Residues Lys-619–Ser-739 lie on the Cytoplasmic side of the membrane. Cys-620 carries S-palmitoyl cysteine lipidation. 2 short sequence motifs (ITIM motif) span residues Val-687 to Val-692 and Thr-712 to Ile-717. 2 positions are modified to phosphotyrosine; by FER: Tyr-689 and Tyr-714. The interval Thr-708–Ser-730 is membrane-bound segment which detaches upon phosphorylation. The interval Pro-722–Ser-739 is may play a role in cytoprotective signaling. A phosphoserine mark is found at Ser-730 and Ser-735.

Trans-homodimer (via Ig-like C2-type 1 and Ig-like C2-type 2 domains); trans-homodimerization is required for cell-cell interaction. Forms a complex with BDKRB2 and GNAQ. Interacts with BDKRB2 and GNAQ. Interacts with PTPN11; Tyr-714 is critical for PTPN11 recruitment. Interacts with FER. Interacts with CD177; the interaction is Ca(2+)-dependent; the interaction is direct. In terms of processing, phosphorylated on Ser and Tyr residues by src kinases after cellular activation. Upon activation, phosphorylated on Ser-730 which probably initiates the dissociation of the membrane-interaction segment (residues 708-730) from the cell membrane allowing the sequential phosphorylation of Tyr-714 and Tyr-689. Constitutively phosphorylated on Ser-735 in resting platelets. Phosphorylated on tyrosine residues by FER and FES in response to FCER1 activation. In endothelial cells Fyn mediates mechanical-force (stretch or pull) induced tyrosine phosphorylation. Palmitoylation by ZDHHC21 is necessary for cell surface expression in endothelial cells and enrichment in membrane rafts.

It localises to the cell membrane. Its subcellular location is the membrane raft. The protein resides in the cell junction. Cell adhesion molecule which is required for leukocyte transendothelial migration (TEM) under most inflammatory conditions. Tyr-689 plays a critical role in TEM and is required for efficient trafficking of PECAM1 to and from the lateral border recycling compartment (LBRC) and is also essential for the LBRC membrane to be targeted around migrating leukocytes. Trans-homophilic interaction may play a role in endothelial cell-cell adhesion via cell junctions. Heterophilic interaction with CD177 plays a role in transendothelial migration of neutrophils. Homophilic ligation of PECAM1 prevents macrophage-mediated phagocytosis of neighboring viable leukocytes by transmitting a detachment signal. Promotes macrophage-mediated phagocytosis of apoptotic leukocytes by tethering them to the phagocytic cells; PECAM1-mediated detachment signal appears to be disabled in apoptotic leukocytes. Modulates bradykinin receptor BDKRB2 activation. Regulates bradykinin- and hyperosmotic shock-induced ERK1/2 activation in endothelial cells. Induces susceptibility to atherosclerosis. In Bos taurus (Bovine), this protein is Platelet endothelial cell adhesion molecule (PECAM1).